The sequence spans 84 residues: Small ribosomal subunit protein bS20 (84 aa).

It belongs to the bacterial ribosomal protein bS20 family.

In terms of biological role, binds directly to 16S ribosomal RNA. The polypeptide is Small ribosomal subunit protein bS20 (Azobacteroides pseudotrichonymphae genomovar. CFP2).